The chain runs to 444 residues: CBL-interacting serine/threonine-protein kinase 1 (444 aa).

Residues Y20–F275 form the Protein kinase domain. Residues L26 to V34 and K49 each bind ATP. The Proton acceptor role is filled by D143. The activation loop stretch occupies residues D161–E190. Residue S165 is modified to Phosphoserine. T179 carries the phosphothreonine modification. An NAF domain is found at D313–E337. The interval E343–V372 is PPI.

The protein belongs to the protein kinase superfamily. CAMK Ser/Thr protein kinase family. SNF1 subfamily. Interacts with CBL1. Interacts with CBL2. Interacts with CBL3. Interacts with CBL9. Interacts with ECT1 and ECT2. The cofactor is Mn(2+). Autophosphorylated. As to expression, ubiquitous.

It catalyses the reaction L-seryl-[protein] + ATP = O-phospho-L-seryl-[protein] + ADP + H(+). It carries out the reaction L-threonyl-[protein] + ATP = O-phospho-L-threonyl-[protein] + ADP + H(+). In terms of biological role, CIPK serine-threonine protein kinases interact with CBL proteins. Binding of a CBL protein to the regulatory NAF domain of CIPK protein lead to the activation of the kinase in a calcium-dependent manner. The polypeptide is CBL-interacting serine/threonine-protein kinase 1 (CIPK1) (Arabidopsis thaliana (Mouse-ear cress)).